The following is a 112-amino-acid chain: Large ribosomal subunit protein bL17 (112 aa).

The protein belongs to the bacterial ribosomal protein bL17 family. Part of the 50S ribosomal subunit. Contacts protein L32.

The protein is Large ribosomal subunit protein bL17 of Heliobacterium modesticaldum (strain ATCC 51547 / Ice1).